Consider the following 242-residue polypeptide: ADP-dependent L-serine kinase SerK (242 aa).

Glu-30 is an active-site residue. ADP contacts are provided by Ser-43, Ile-49, Trp-51, and Lys-52. O-phospho-L-serine is bound at residue Val-68. Positions 69, 70, 71, 72, and 73 each coordinate ADP. Asp-69 lines the Mg(2+) pocket. O-phospho-L-serine is bound by residues Gly-70, His-71, and His-72. Residues Trp-102, Lys-221, Thr-223, and His-225 each contribute to the O-phospho-L-serine site.

Belongs to the SerK family. Mg(2+) serves as cofactor.

The enzyme catalyses L-serine + ADP = O-phospho-L-serine + AMP + H(+). It functions in the pathway amino-acid biosynthesis; L-cysteine biosynthesis; L-cysteine from L-serine: step 1/2. In terms of biological role, free serine kinase that uses ADP to phosphorylate L-serine to yield O-phospho-L-serine and AMP. In Thermococcus kodakarensis (strain ATCC BAA-918 / JCM 12380 / KOD1) (Pyrococcus kodakaraensis (strain KOD1)), this protein is ADP-dependent L-serine kinase SerK.